The sequence spans 1040 residues: Contactin-2 (1040 aa).

The first 30 residues, 1–30, serve as a signal peptide directing secretion; the sequence is MGTHARKKASLLLLVLATVALVSSPGWSFA. 6 Ig-like C2-type domains span residues 39–130, 135–224, 241–324, 329–413, 419–506, and 511–605; these read PIFE…AVLR, QEFS…SVFS, PSIK…GRII, PEWL…AELA, PDFR…GILS, and TKIT…ATVL. Disulfide bonds link Cys-63/Cys-113, Cys-157/Cys-209, Cys-263/Cys-308, and Cys-350/Cys-397. 3 N-linked (GlcNAc...) asparagine glycosylation sites follow: Asn-78, Asn-200, and Asn-206. Residues Asn-463, Asn-479, Asn-500, and Asn-527 are each glycosylated (N-linked (GlcNAc...) asparagine). Fibronectin type-III domains follow at residues 612–710, 715–812, 817–913, and 917–1008; these read PPGG…TKEA, APSG…SAEE, APAK…VKPP, and PPGN…NGGT. Asn-777 is a glycosylation site (N-linked (GlcNAc...) asparagine). Positions 796–798 match the Cell attachment site motif; that stretch reads RGD. N-linked (GlcNAc...) asparagine glycans are attached at residues Asn-832, Asn-920, and Asn-942. Residues 895-921 are disordered; the sequence is RAGTGPASPSADAMTVKPPPRRPPGNI. Ala-1015 carries GPI-anchor amidated alanine lipidation. A propeptide spans 1016 to 1040 (removed in mature form); that stretch reads AARPAHPGPAFSCMVILMLAGYQKL.

Belongs to the immunoglobulin superfamily. Contactin family. In neural tissues in embryos, and in adult brain, spinal cord and cerebellum.

The protein localises to the cell membrane. In terms of biological role, may play a role in the initial growth and guidance of axons. May be involved in cell adhesion. In conjunction with another transmembrane protein, CNTNAP2, contributes to the organization of axonal domains at nodes of Ranvier by maintaining voltage-gated potassium channels at the juxtaparanodal region. The chain is Contactin-2 (Cntn2) from Rattus norvegicus (Rat).